Consider the following 555-residue polypeptide: Zinc transporter ZIP5 (555 aa).

At 1 to 242 (MGGQTVWMTL…HSQASKTSEG (242 aa)) the chain is on the extracellular side. Positions 108–148 (KHPSQSISHSHSHEDHHPSQGTTNSPPLRESLDAKSALSGS) are disordered. A helical membrane pass occupies residues 243–263 (FLIALGWASLALLVISLPSLV). Topologically, residues 264–314 (ALGMAPLLQPSVLQVFLCPMAGMAVGTLCGDALLHLMPHAIFSQHTDHQNA) are cytoplasmic. Residues 315–335 (VFKGLSVLGGLYLLFIFESLL) form a helical membrane-spanning segment. The Extracellular portion of the chain corresponds to 336–408 (GLKQHFKNLK…DGIHNLTDGL (73 aa)). Positions 363–374 (TSSANQNESSGH) are enriched in polar residues. A disordered region spans residues 363–383 (TSSANQNESSGHGHSHGQAEP). Residues 409-429 (AIGVAFSQSLTGGFSTAIAVF) traverse the membrane as a helical segment. The Cytoplasmic portion of the chain corresponds to 430-452 (CHELPHELGDLAVLLSAGWPVRR). The chain crosses the membrane as a helical span at residues 453–473 (LLVFSGLSALLGFVGVLAGSA). Residues 474–482 (LGNHWASHS) lie on the Extracellular side of the membrane. Residues 483–503 (PWILTLTAGVFLYVALADMMP) form a helical membrane-spanning segment. At 504–518 (EMLHGACGSVSPLKR) the chain is on the cytoplasmic side. The helical transmembrane segment at 519 to 539 (FLLQALGLLTGGAIMLCIALF) threads the bilayer. Residues 540–555 (EDHIAVSLGENSLGEN) lie on the Extracellular side of the membrane.

It belongs to the ZIP transporter (TC 2.A.5) family.

Its subcellular location is the basolateral cell membrane. The catalysed reaction is Zn(2+)(in) = Zn(2+)(out). Uniporter that transports zinc(2+) into polarized cells of enterocytes, pancreatic acinar and endoderm cells across the basolateral membrane and participates, notably, in zinc excretion from the intestine by the uptake of zinc from the blood into the intestine. The transport mechanism is temperature- and concentration-dependent and saturable. Mediates zinc homeostasis that is essential for venous angiogenesis. The protein is Zinc transporter ZIP5 (slc39a5) of Danio rerio (Zebrafish).